The following is a 103-amino-acid chain: Small ribosomal subunit protein uS10 (103 aa).

This sequence belongs to the universal ribosomal protein uS10 family. In terms of assembly, part of the 30S ribosomal subunit.

Involved in the binding of tRNA to the ribosomes. This chain is Small ribosomal subunit protein uS10, found in Korarchaeum cryptofilum (strain OPF8).